A 312-amino-acid polypeptide reads, in one-letter code: Cytochrome c biogenesis protein CcsA (312 aa).

Helical transmembrane passes span 18–38 (LGILIFYFLLINLPISLLALF), 48–68 (FFTILINLFIALQLIFRWILS), 73–93 (ISNLYESLYFLVWGISLGQLL), 102–122 (IIPVIAIPIELLTIAFACFVL), 148–168 (VMLSYAALIIGSLLSASVLFI), 216–236 (SILVGFVLLTLGLITGAIWAN), 250–267 (TWAFISWLFYAAYLHMRI), and 279–299 (FATSGFFVVLICYLGVNFLGI).

Belongs to the CcmF/CycK/Ccl1/NrfE/CcsA family. May interact with ccs1.

It is found in the cellular thylakoid membrane. Functionally, required during biogenesis of c-type cytochromes (cytochrome c6 and cytochrome f) at the step of heme attachment. This is Cytochrome c biogenesis protein CcsA from Prochlorococcus marinus (strain MIT 9515).